The chain runs to 364 residues: Membrane-bound lytic murein transglycosylase C (364 aa).

Positions 1 to 19 (MNKYKKFLPLLVLIPFLAS) are cleaved as a signal peptide. Cys-20 carries N-palmitoyl cysteine lipidation. Residue Cys-20 is the site of S-diacylglycerol cysteine attachment.

Belongs to the transglycosylase Slt family.

Its subcellular location is the cell outer membrane. It catalyses the reaction Exolytic cleavage of the (1-&gt;4)-beta-glycosidic linkage between N-acetylmuramic acid (MurNAc) and N-acetylglucosamine (GlcNAc) residues in peptidoglycan, from either the reducing or the non-reducing ends of the peptidoglycan chains, with concomitant formation of a 1,6-anhydrobond in the MurNAc residue.. Murein-degrading enzyme. May play a role in recycling of muropeptides during cell elongation and/or cell division. The sequence is that of Membrane-bound lytic murein transglycosylase C from Glaesserella parasuis serovar 5 (strain SH0165) (Haemophilus parasuis).